The chain runs to 786 residues: UPF0313 protein SO_0311 (786 aa).

One can recognise a Radical SAM core domain in the interval 371–649; that stretch reads AYDMIKTSIN…KALLRYHDPA (279 aa). [4Fe-4S] cluster contacts are provided by Cys385, Cys389, and Cys392. Disordered regions lie at residues 669-688 and 698-786; these read NSPN…PKWM and LTRF…QQAK. Basic and acidic residues-rich tracts occupy residues 679–688 and 706–717; these read GRNERGPKWM and FDERKGKGDAKG. The segment covering 718-731 has biased composition (low complexity); the sequence is KPSASKPKGPKSGA. Over residues 732 to 741 the composition is skewed to polar residues; sequence NAPQSQQPKT.

This sequence belongs to the UPF0313 family. [4Fe-4S] cluster is required as a cofactor.

This is UPF0313 protein SO_0311 from Shewanella oneidensis (strain ATCC 700550 / JCM 31522 / CIP 106686 / LMG 19005 / NCIMB 14063 / MR-1).